The following is a 738-amino-acid chain: Glycogen [starch] synthase, muscle (738 aa).

S8 carries the post-translational modification Phosphoserine; by AMPK and PKA. A Phosphoserine modification is found at S11. Residue K39 participates in UDP binding. Residues H205 and R211 each coordinate UDP-alpha-D-glucose. Alpha-D-glucose 6-phosphate contacts are provided by H291, E292, Q294, H297, and K301. R331 is a binding site for UDP. Position 331 (R331) interacts with UDP-alpha-D-glucose. S412 carries the phosphoserine modification. An alpha-D-glucose 6-phosphate-binding site is contributed by H501. Residues E510, W512, and G513 each coordinate UDP-alpha-D-glucose. Residue T515 coordinates UDP. Alpha-D-glucose 6-phosphate is bound by residues R582 and R586. A disordered region spans residues 632–738 (QGYRYPRPAS…PTSSLGEERN (107 aa)). Position 641 is a phosphoserine; by DYRK2, GSK3-alpha, GSK3-beta and PASK (S641). S645, S649, S652, S653, S657, and S672 each carry phosphoserine. A compositionally biased stretch (acidic residues) spans 658-681 (EDEEEPRDGPLGEDSERYDEEEEA). The segment covering 682–695 (AKDRRNIRAPEWPR) has biased composition (basic and acidic residues). S698, S709, and S711 each carry phosphoserine. A compositionally biased stretch (low complexity) spans 698-738 (SCSSSTGGSKRSNSVDTGPSSSLSTPTEPLSPTSSLGEERN). A phosphothreonine mark is found at T722 and T724. A phosphoserine mark is found at S728 and S732.

This sequence belongs to the glycosyltransferase 3 family. As to quaternary structure, part of the GYS1-GYG1 complex, a heterooctamer composed of a tetramer of GYS1 and 2 dimers of GYG1, where each GYS1 protomer binds to one GYG1 subunit (via GYG1 C-terminus); the GYS1 tetramer may dissociate from GYG1 dimers to continue glycogen polymerization on its own. Post-translationally, primed phosphorylation at Ser-657 (site 5) by CSNK2A1 and CSNK2A2 is required for inhibitory phosphorylation at Ser-641 (site 3a), Ser-645 (site 3b), Ser-649 (site 3c) and Ser-653 (site 4) by GSK3A an GSK3B. Phosphorylated at Ser-641 by PASK, leading to inactivation; phosphorylation by PASK is inhibited by glycogen. Phosphorylated at Ser-641 by DYRK2, leading to inactivation. Dephosphorylation at Ser-641 and Ser-645 by PP1 activates the enzyme. Phosphorylation at Ser-8 by AMPK inactivates the enzyme activity.

It carries out the reaction [(1-&gt;4)-alpha-D-glucosyl](n) + UDP-alpha-D-glucose = [(1-&gt;4)-alpha-D-glucosyl](n+1) + UDP + H(+). It participates in glycan biosynthesis; glycogen biosynthesis. Allosteric activation by glucose-6-phosphate. Phosphorylation reduces the activity towards UDP-glucose. When in the non-phosphorylated state, glycogen synthase does not require glucose-6-phosphate as an allosteric activator; when phosphorylated it does. Its function is as follows. Glycogen synthase participates in the glycogen biosynthetic process along with glycogenin and glycogen branching enzyme. Extends the primer composed of a few glucose units formed by glycogenin by adding new glucose units to it. In this context, glycogen synthase transfers the glycosyl residue from UDP-Glc to the non-reducing end of alpha-1,4-glucan. This Mus musculus (Mouse) protein is Glycogen [starch] synthase, muscle (Gys1).